We begin with the raw amino-acid sequence, 199 residues long: NAD(P)H dehydrogenase (quinone) (199 aa).

Positions 4–190 (MLVLYYSAYG…DGARFQGRRV (187 aa)) constitute a Flavodoxin-like domain. Residues 10–15 (SAYGHM) and 78–80 (TRY) contribute to the FMN site. Tyr-12 serves as a coordination point for NAD(+). Trp-98 provides a ligand contact to substrate. FMN contacts are provided by residues 113 to 119 (STATQYG) and His-134. Residues 161–181 (YGMTTTADGDGSRQPSAQELD) form a disordered region. Positions 163–177 (MTTTADGDGSRQPSA) are enriched in polar residues.

This sequence belongs to the WrbA family. FMN is required as a cofactor.

The catalysed reaction is a quinone + NADH + H(+) = a quinol + NAD(+). It carries out the reaction a quinone + NADPH + H(+) = a quinol + NADP(+). The chain is NAD(P)H dehydrogenase (quinone) from Brucella canis (strain ATCC 23365 / NCTC 10854 / RM-666).